Here is a 243-residue protein sequence, read N- to C-terminus: Toxin CcTX-1 (243 aa).

A compositionally biased stretch (basic and acidic residues) spans 1–25; that stretch reads SSPEKKNDMSKPGRMRFDNKKEPRS. Residues 1 to 48 form a disordered region; that stretch reads SSPEKKNDMSKPGRMRFDNKKEPRSSAKNSGNGYGCVDVNAGREPLTG.

Post-translationally, contains disulfide bonds. In terms of tissue distribution, nematocytes.

Its subcellular location is the secreted. It localises to the nematocyst. It is found in the target cell membrane. Functionally, has potent hemolytic activity. Is lethal to crayfish. Causes cutaneous inflammation in humans. May act as a pore-forming toxin, disrupting normal transmembrane ion concentration gradients in susceptible cells. The chain is Toxin CcTX-1 from Cyanea capillata (Lion's mane jellyfish).